A 418-amino-acid chain; its full sequence is UDP-N-acetylglucosamine 1-carboxyvinyltransferase (418 aa).

Phosphoenolpyruvate is bound at residue 22–23; it reads KN. R92 is a binding site for UDP-N-acetyl-alpha-D-glucosamine. The active-site Proton donor is C116. Position 116 is a 2-(S-cysteinyl)pyruvic acid O-phosphothioketal (C116). Residues 121–125, D305, and L327 contribute to the UDP-N-acetyl-alpha-D-glucosamine site; that span reads RPIDL.

The protein belongs to the EPSP synthase family. MurA subfamily.

It is found in the cytoplasm. It catalyses the reaction phosphoenolpyruvate + UDP-N-acetyl-alpha-D-glucosamine = UDP-N-acetyl-3-O-(1-carboxyvinyl)-alpha-D-glucosamine + phosphate. It participates in cell wall biogenesis; peptidoglycan biosynthesis. Cell wall formation. Adds enolpyruvyl to UDP-N-acetylglucosamine. The polypeptide is UDP-N-acetylglucosamine 1-carboxyvinyltransferase (Campylobacter jejuni subsp. jejuni serotype O:23/36 (strain 81-176)).